The primary structure comprises 191 residues: PBAN-type neuropeptides (191 aa).

Residues 1–17 (MFSPLLFFAVSISCVLA) form the signal peptide. L44 bears the Leucine amide mark. Positions 48 to 91 (SLRISTEDNRQAFFKLLEAADALKYYYDRLPYEMQADEPETRVT) are excised as a propeptide. 4 positions are modified to leucine amide: L100, L120, L156, and L166. The propeptide occupies 169–191 (ELSYDMLPSKLRLVRSTNRTQST).

The protein belongs to the pyrokinin family. In terms of tissue distribution, expressed in the subesophageal ganglion.

Its subcellular location is the secreted. In terms of biological role, a hormone that controls sex pheromone production in females and pheromone responsiveness in male. The polypeptide is PBAN-type neuropeptides (Spodoptera littoralis (Egyptian cotton leafworm)).